We begin with the raw amino-acid sequence, 238 residues long: Phosphoribosylaminoimidazole-succinocarboxamide synthase (238 aa).

It belongs to the SAICAR synthetase family.

The catalysed reaction is 5-amino-1-(5-phospho-D-ribosyl)imidazole-4-carboxylate + L-aspartate + ATP = (2S)-2-[5-amino-1-(5-phospho-beta-D-ribosyl)imidazole-4-carboxamido]succinate + ADP + phosphate + 2 H(+). It participates in purine metabolism; IMP biosynthesis via de novo pathway; 5-amino-1-(5-phospho-D-ribosyl)imidazole-4-carboxamide from 5-amino-1-(5-phospho-D-ribosyl)imidazole-4-carboxylate: step 1/2. The sequence is that of Phosphoribosylaminoimidazole-succinocarboxamide synthase from Chlorobium phaeovibrioides (strain DSM 265 / 1930) (Prosthecochloris vibrioformis (strain DSM 265)).